Reading from the N-terminus, the 435-residue chain is MQISVESVNSIKKKLNFEIPADKVSAEVDKAYAEIRKHAAIKGFRKGKVPMSLIEKHYGEKMAEDVVKNLVQESYFSAVSEQGLNPVGYPAIESDQLKKGEPFKYSATVEVFPEVEVKDYTGLEVVKEKLEVDDSVVAARLKEMQERMAQLGPAPEGHAAAMGDFVTFDFKGSIDGVYFEGGSAEDFQLELGSGRFIPGFEEQMVGMTVGTNSTIKVNFPEGYGNADLSGKPADFEVSVKEIKVKELPELNDDFAKEFGEEFETLDLLKAKLAEINETQEASRINAELRDRLIKALIEKNEIEVPEALVDRQVQMMLESTKQRLASQRLSLDMMGMTDDSYKAQFREAAREQVKGSLLLDAVAEKEKIEPTEEELEAQLSVIAEQTRQDLEKVAQLYKTNERAKDNLMAQMREDKAVKFILDRAKVTEVPKAEIK.

The PPIase FKBP-type domain occupies Gly163–Pro248.

It belongs to the FKBP-type PPIase family. Tig subfamily.

Its subcellular location is the cytoplasm. It carries out the reaction [protein]-peptidylproline (omega=180) = [protein]-peptidylproline (omega=0). Its function is as follows. Involved in protein export. Acts as a chaperone by maintaining the newly synthesized protein in an open conformation. Functions as a peptidyl-prolyl cis-trans isomerase. The chain is Trigger factor from Geobacter sp. (strain M21).